The primary structure comprises 345 residues: uncharacterized protein (345 aa).

2 disordered regions span residues 1-58 (MPSP…WRGD) and 139-165 (KTNSTFYKDNGDSSEKQGSAESKNSPK). The span at 27–39 (IKGEGSDDGKEKS) shows a compositional bias: basic and acidic residues. Positions 154–165 (KQGSAESKNSPK) are enriched in polar residues.

This sequence belongs to the MG307/MG309/MG338 family.

This is an uncharacterized protein from Mycoplasma pneumoniae (strain ATCC 29342 / M129 / Subtype 1) (Mycoplasmoides pneumoniae).